A 359-amino-acid polypeptide reads, in one-letter code: Peptide chain release factor 1 (359 aa).

An N5-methylglutamine modification is found at Gln236.

This sequence belongs to the prokaryotic/mitochondrial release factor family. Methylated by PrmC. Methylation increases the termination efficiency of RF1.

Its subcellular location is the cytoplasm. Functionally, peptide chain release factor 1 directs the termination of translation in response to the peptide chain termination codons UAG and UAA. This Streptococcus pyogenes serotype M6 (strain ATCC BAA-946 / MGAS10394) protein is Peptide chain release factor 1.